Reading from the N-terminus, the 424-residue chain is Phosphomethylpyrimidine synthase (424 aa).

Residues N66, M95, Y124, H163, 185-187 (SRG), 226-229 (DGMR), and E265 each bind substrate. H269 serves as a coordination point for Zn(2+). Position 292 (F292) interacts with substrate. H333 contributes to the Zn(2+) binding site. [4Fe-4S] cluster is bound by residues C408, C411, and C415.

The protein belongs to the ThiC family. The cofactor is [4Fe-4S] cluster.

It catalyses the reaction 5-amino-1-(5-phospho-beta-D-ribosyl)imidazole + S-adenosyl-L-methionine = 4-amino-2-methyl-5-(phosphooxymethyl)pyrimidine + CO + 5'-deoxyadenosine + formate + L-methionine + 3 H(+). Its pathway is cofactor biosynthesis; thiamine diphosphate biosynthesis. Functionally, catalyzes the synthesis of the hydroxymethylpyrimidine phosphate (HMP-P) moiety of thiamine from aminoimidazole ribotide (AIR) in a radical S-adenosyl-L-methionine (SAM)-dependent reaction. The sequence is that of Phosphomethylpyrimidine synthase from Thermotoga petrophila (strain ATCC BAA-488 / DSM 13995 / JCM 10881 / RKU-1).